The primary structure comprises 217 residues: Probable septum site-determining protein MinC (217 aa).

Belongs to the MinC family. In terms of assembly, interacts with MinD and FtsZ.

Its function is as follows. Cell division inhibitor that blocks the formation of polar Z ring septums. Rapidly oscillates between the poles of the cell to destabilize FtsZ filaments that have formed before they mature into polar Z rings. Prevents FtsZ polymerization. The chain is Probable septum site-determining protein MinC from Pelotomaculum thermopropionicum (strain DSM 13744 / JCM 10971 / SI).